We begin with the raw amino-acid sequence, 254 residues long: Homeobox protein Dlx4b (254 aa).

A DNA-binding region (homeobox) is located at residues 129-188; that stretch reads IRKPRTIYSSVQLQALHQRFQQTQYLALPERADLAAKLGLTQTQVKIWFQNKRSKYKKIM.

It belongs to the distal-less homeobox family.

It is found in the nucleus. In terms of biological role, during larvae development, may be important for neurocranium morphogenesis. The chain is Homeobox protein Dlx4b (dlx4b) from Danio rerio (Zebrafish).